Here is a 490-residue protein sequence, read N- to C-terminus: Pre-glycoprotein polyprotein GP complex (490 aa).

A lipid anchor (N-myristoyl glycine; by host) is attached at Gly-2. The Extracellular segment spans residues 2–17 (GQIVTFFQEVPHVIEE). The chain crosses the membrane as a helical span at residues 18–33 (VMNIVLIALSILAILK). Residues 34–58 (GLYNVATCGLIGLVTFLLLSGRSCS) are Cytoplasmic-facing. Cys-57 lines the Zn(2+) pocket. At 59 to 431 (LIYKGTYELQ…QGKTPLGLVD (373 aa)) the chain is on the extracellular side. 6 N-linked (GlcNAc...) asparagine; by host glycosylation sites follow: Asn-78, Asn-88, Asn-98, Asn-108, Asn-118, and Asn-166. 6 disulfide bridges follow: Cys-85–Cys-230, Cys-117–Cys-154, Cys-179–Cys-211, Cys-278–Cys-291, Cys-300–Cys-309, and Cys-363–Cys-384. Asn-223 carries an N-linked (GlcNAc...) asparagine; by host glycan. 4 N-linked (GlcNAc...) asparagine; by host glycosylation sites follow: Asn-364, Asn-372, Asn-389, and Asn-394. The chain crosses the membrane as a helical span at residues 432–452 (LFVFSTSFYLISIFLHLVKIP). Topologically, residues 453–490 (THRHIVGKPCPKPHRLNHMGICSCGLYKQPGVPVRWKR) are cytoplasmic. The Zn(2+) site is built by His-454, His-456, Cys-462, His-466, Cys-474, and Cys-476.

It belongs to the arenaviridae GPC protein family. Interacts with glycoprotein G2. Part of the GP complex (GP-C) together with glycoprotein G1 and glycoprotein G2. The GP-complex interacts with protein Z, which interacts with ribonucleocapsid; these interactions may induce virion budding. In terms of assembly, homotrimer; disulfide-linked. In pre-fusion state, G1 homotrimers bind G2 homotrimers via ionic interactions. Part of the GP complex (GP-C) together with glycoprotein G2 and the stable signal peptide. Interacts with the primary host receptor DAG1 on the cell surface; this interaction occurs at pH 8.0 but not at pH 6.0 and below. Upon virus internalization and at endosomal pH, interacts with the host lysosomal protein LAMP1; this interaction mediates G1 dissociation from GP-C and membrane fusion. The GP-complex interacts with protein Z, which interacts with ribonucleocapsid; these interactions may induce virion budding. As to quaternary structure, homotrimer. Interacts with the stable signal peptide. In pre-fusion state, G2 homotrimers bind G1 homotrimers via ionic interactions. Part of the GP complex (GP-C) together with glycoprotein G1 and the stable signal peptide. Acidification in the endosome triggers rearrangements, which ultimately leads to a 6 helix bundle formed by the two heptad repeat domains (HR1 and HR2) in post-fusion state. The GP-complex interacts with protein Z, which interacts with ribonucleocapsid; these interactions may induce virion budding. In terms of processing, specific enzymatic cleavages in vivo yield mature proteins. GP-C polyprotein is cleaved in the endoplasmic reticulum by the host protease MBTPS1. Only cleaved glycoprotein is incorporated into virions. The SSP remains stably associated with the GP complex following cleavage by signal peptidase and plays crucial roles in the trafficking of GP through the secretory pathway. Post-translationally, myristoylation is necessary for GP2-mediated fusion activity.

Its subcellular location is the virion membrane. The protein resides in the host endoplasmic reticulum membrane. It localises to the host Golgi apparatus membrane. The protein localises to the host cell membrane. Functionally, functions as a cleaved signal peptide that is retained as the third component of the GP complex (GP-C). Helps to stabilize the spike complex in its native conformation. The SSP is required for efficient glycoprotein expression, post-translational maturation cleavage of G1 and G2, glycoprotein transport to the cell surface plasma membrane, formation of infectious virus particles, and acid pH-dependent glycoprotein-mediated cell fusion. Forms the virion spikes together with glycoprotein G2. The glycoprotein spike trimers are connected to the underlying matrix. Interacts with the host receptor. Mediates virus attachment to the host primary receptor alpha-dystroglycan DAG1 (alpha-DG) at the cell surface. This attachment induces virion internalization apparently through macropinocytosis. Following endocytosis, there is a pH-dependent switch from binding DAG1 to the host lysosomal receptor LAMP1. This latter binding triggers the dissociation of GP1, exposing the fusion subunit, GP2, such that fusion can occur. Down-modulates host DAG1. Its function is as follows. Forms the virion spikes together with glycoprotein G1. The glycoprotein spike trimers are connected to the underlying matrix. Class I viral fusion protein that directs fusion of viral and host endosomal membranes, leading to delivery of the nucleocapsid into the cytoplasm. Membrane fusion is mediated by irreversible conformational changes induced by acidification. The chain is Pre-glycoprotein polyprotein GP complex from Lassa virus (strain GA391) (LASV).